The chain runs to 577 residues: Lysine-specific demethylase 7B (577 aa).

The PHD-type zinc-finger motif lies at 5–56; the sequence is QLYCVCRQPYDVSRFMIECDICKDWFHGSCVEVEEHYAVDIDVYHCPNCDVH. One can recognise a JmjC domain in the interval 198–354; it reads FSDTKMAELV…MQLRCYEMER (157 aa). Thr-247 lines the substrate pocket. Residues His-250 and Asp-252 each contribute to the Fe cation site. Residue Lys-267 coordinates substrate. A Fe cation-binding site is contributed by His-322. Residues 460–513 form a disordered region; sequence CPSTRSAHERGSHARKTARRLRGHHHHHHRHHHHHHHHHHHNHQHSDGPKAPSH. The span at 472–502 shows a compositional bias: basic residues; sequence HARKTARRLRGHHHHHHRHHHHHHHHHHHNH.

The protein belongs to the JHDM1 histone demethylase family. JHDM1D subfamily. It depends on Fe(2+) as a cofactor. Predominantly expressed in brain.

It localises to the nucleus. Histone demethylase required for brain development. Specifically demethylates dimethylated 'Lys-9' and 'Lys-27' (H3K9me2 and H3K27me2, respectively) of histone H3 and monomethylated histone H4 'Lys-20' residue (H4K20Me1), thereby playing a central role in histone code. This Danio rerio (Zebrafish) protein is Lysine-specific demethylase 7B (jhdm1db).